Consider the following 202-residue polypeptide: Orotate phosphoribosyltransferase (202 aa).

5-phospho-alpha-D-ribose 1-diphosphate is bound by residues K93 and 113–121 (EDIITTGGS). Residues T117 and R145 each contribute to the orotate site.

The protein belongs to the purine/pyrimidine phosphoribosyltransferase family. PyrE subfamily. As to quaternary structure, homodimer. Mg(2+) serves as cofactor.

It carries out the reaction orotidine 5'-phosphate + diphosphate = orotate + 5-phospho-alpha-D-ribose 1-diphosphate. The protein operates within pyrimidine metabolism; UMP biosynthesis via de novo pathway; UMP from orotate: step 1/2. In terms of biological role, catalyzes the transfer of a ribosyl phosphate group from 5-phosphoribose 1-diphosphate to orotate, leading to the formation of orotidine monophosphate (OMP). The sequence is that of Orotate phosphoribosyltransferase from Campylobacter jejuni subsp. jejuni serotype O:2 (strain ATCC 700819 / NCTC 11168).